We begin with the raw amino-acid sequence, 234 residues long: Ankyrin repeat-containing protein C6C3.08 (234 aa).

ANK repeat units follow at residues 36-66, 70-100, 106-135, 140-169, and 173-203; these read DKRTPLHWACSVGKVNTIYFLLKQPNIKPDE, AGWTPLMISINNRSVPDNVIEELINRSDVDP, GGQTCLHYAAGKGRLSIVQLLCDKAPELIR, QGQTPLHRAAAVGKIQVVKYLISQRAPLNT, and YGFTPLHFALAEGHPDVGVELVRAGADTLRK.

The chain is Ankyrin repeat-containing protein C6C3.08 from Schizosaccharomyces pombe (strain 972 / ATCC 24843) (Fission yeast).